A 110-amino-acid polypeptide reads, in one-letter code: Large ribosomal subunit protein uL22 (110 aa).

This sequence belongs to the universal ribosomal protein uL22 family. Part of the 50S ribosomal subunit.

Its function is as follows. This protein binds specifically to 23S rRNA; its binding is stimulated by other ribosomal proteins, e.g. L4, L17, and L20. It is important during the early stages of 50S assembly. It makes multiple contacts with different domains of the 23S rRNA in the assembled 50S subunit and ribosome. In terms of biological role, the globular domain of the protein is located near the polypeptide exit tunnel on the outside of the subunit, while an extended beta-hairpin is found that lines the wall of the exit tunnel in the center of the 70S ribosome. The polypeptide is Large ribosomal subunit protein uL22 (Glaesserella parasuis serovar 5 (strain SH0165) (Haemophilus parasuis)).